The primary structure comprises 470 residues: Uronate isomerase (470 aa).

The protein belongs to the metallo-dependent hydrolases superfamily. Uronate isomerase family.

It carries out the reaction D-glucuronate = D-fructuronate. It catalyses the reaction aldehydo-D-galacturonate = keto-D-tagaturonate. It participates in carbohydrate metabolism; pentose and glucuronate interconversion. The polypeptide is Uronate isomerase (Escherichia fergusonii (strain ATCC 35469 / DSM 13698 / CCUG 18766 / IAM 14443 / JCM 21226 / LMG 7866 / NBRC 102419 / NCTC 12128 / CDC 0568-73)).